Here is a 727-residue protein sequence, read N- to C-terminus: Pre-B-cell leukemia transcription factor-interacting protein 1 (727 aa).

Residues 1-10 (MASCPDSDNS) show a composition bias toward polar residues. Positions 1–169 (MASCPDSDNS…GREPSSSQPV (169 aa)) are disordered. 4 positions are modified to phosphoserine: Ser-131, Ser-142, Ser-143, and Ser-144. Thr-148 is subject to Phosphothreonine. Residue Ser-164 is modified to Phosphoserine. Coiled-coil stretches lie at residues 270 to 350 (FLLD…RGVD) and 377 to 405 (DPSL…WQLL). The segment covering 446-456 (QGINTGRSPND) has biased composition (polar residues). Disordered stretches follow at residues 446 to 565 (QGIN…NSPD) and 694 to 727 (LKKR…YHQG). Residues 473–563 (WGGKEKWRGG…QKHSWGKDNS (91 aa)) show a composition bias toward basic and acidic residues. The Nuclear localization signal signature appears at 486 to 506 (QKAEHWKPRKEESGQERQRSW). Ser-563 carries the phosphoserine modification. The short motif at 691–716 (DKALKKRSRKKEKHSWNPRVVGPREE) is the Nuclear localization signal element. The segment covering 694-703 (LKKRSRKKEK) has biased composition (basic residues).

As to quaternary structure, interacts with ESR1, PBX1, PBX2 and PBX3. Interacts with TEX11.

The protein resides in the cytoplasm. It is found in the cytoskeleton. The protein localises to the nucleus. Regulator of pre-B-cell leukemia transcription factors (BPXs) function. Inhibits the binding of PBX1-HOX complex to DNA and blocks the transcriptional activity of E2A-PBX1. Tethers estrogen receptor-alpha (ESR1) to microtubules and allows them to influence estrogen receptors-alpha signaling. The chain is Pre-B-cell leukemia transcription factor-interacting protein 1 (Pbxip1) from Mus musculus (Mouse).